The chain runs to 280 residues: uncharacterized protein (280 aa).

Helical transmembrane passes span 3–23 (ILIT…GMYI), 52–72 (FGLF…GSIV), 81–101 (INGL…NLQI), 123–143 (NWLV…LILL), 196–216 (FADI…IIIG), and 233–253 (IFAC…LLHI).

Its subcellular location is the cell membrane. This is an uncharacterized protein from Rickettsia prowazekii (strain Madrid E).